The chain runs to 193 residues: General stress protein 16U (193 aa).

The protein belongs to the CAPAB/TerDEXZ family.

The protein is General stress protein 16U (yceD) of Bacillus subtilis (strain 168).